We begin with the raw amino-acid sequence, 670 residues long: DNA ligase (670 aa).

NAD(+) contacts are provided by residues 31–35 (DAEYD), 76–77 (SL), and E108. The active-site N6-AMP-lysine intermediate is K110. 4 residues coordinate NAD(+): R131, E166, K271, and K295. Residues C388, C391, C406, and C412 each contribute to the Zn(2+) site. Residues 579 to 668 (NIGGSLSGKK…NTPALKKETS (90 aa)) enclose the BRCT domain.

This sequence belongs to the NAD-dependent DNA ligase family. LigA subfamily. It depends on Mg(2+) as a cofactor. Requires Mn(2+) as cofactor.

It carries out the reaction NAD(+) + (deoxyribonucleotide)n-3'-hydroxyl + 5'-phospho-(deoxyribonucleotide)m = (deoxyribonucleotide)n+m + AMP + beta-nicotinamide D-nucleotide.. Functionally, DNA ligase that catalyzes the formation of phosphodiester linkages between 5'-phosphoryl and 3'-hydroxyl groups in double-stranded DNA using NAD as a coenzyme and as the energy source for the reaction. It is essential for DNA replication and repair of damaged DNA. This is DNA ligase from Neorickettsia sennetsu (strain ATCC VR-367 / Miyayama) (Ehrlichia sennetsu).